The primary structure comprises 203 residues: Cupin-domain-containing oxidoreductase fogC (203 aa).

Positions 105-171 (DFAPGVESPL…GNGTLPGRML (67 aa)) are cupin-like domain.

The protein belongs to the virC family.

The protein operates within secondary metabolite biosynthesis. Its function is as follows. Cupin-domain-containing oxidoreductase; part of the gene cluster that mediates the biosynthesis of flavoglaucin and congeners (including aspergin, dihydroauroglaucin and auroglaucin), prenylated salicylaldehyde derivatives carrying a saturated or an unsaturated C-7 side chain. The PKS fogA releases the carboxylic acid (8E,10E,12E)-3,5,7-trihydroxytetradeca-8,10,12-trienoic acid as its product, as well as derivatives with one and two double bonds. FogA is indeed able to reduce the initial triketide, thus being at least partially responsible for the differently saturated heptyl side chains of flavoglaucin congeners. The oxidoreductases fogB, fogC and fogD modify the nascent polyketide in fogA-bound form and, together, fogA, fogB, fogC and fogD are necessary for the formation of the aromatic core and the cyclized PKS products are released as salicyl alcohols. In particular, fogB is responsible for oxidation of a hydroxyl group or reduction of remaining double bond(s) at the C-7 residue whereas fogD is probably involved in the reductive release of the modified PKS products. The cytochrome P450 monooxygenase fogE is then responsible for the hydroxylation at C-3 of the benzene ring. The fogE products are substrates of the prenyltransferase fogH and the prenylated benzyl alcohols are subsequently oxidized by the fogF to produce the final aryl aldehydes flavoglaucin and congeners. The short-chain dehydrogenase fogG does not seem to be involved in the biosynthesis of the prenylated salicylaldehyde derivatives. In Aspergillus ruber (strain CBS 135680), this protein is Cupin-domain-containing oxidoreductase fogC.